Here is a 51-residue protein sequence, read N- to C-terminus: Toxin CSTX-18 (51 aa).

4 cysteine pairs are disulfide-bonded: Cys9-Cys22, Cys14-Cys27, Cys21-Cys36, and Cys29-Cys34.

Post-translationally, contains 4 disulfide bonds. In terms of tissue distribution, expressed by the venom gland.

Its subcellular location is the secreted. The protein is Toxin CSTX-18 of Cupiennius salei (American wandering spider).